The primary structure comprises 176 residues: ATP synthase subunit delta (176 aa).

Belongs to the ATPase delta chain family. F-type ATPases have 2 components, F(1) - the catalytic core - and F(0) - the membrane proton channel. F(1) has five subunits: alpha(3), beta(3), gamma(1), delta(1), epsilon(1). F(0) has three main subunits: a(1), b(2) and c(10-14). The alpha and beta chains form an alternating ring which encloses part of the gamma chain. F(1) is attached to F(0) by a central stalk formed by the gamma and epsilon chains, while a peripheral stalk is formed by the delta and b chains.

It is found in the cell membrane. Its function is as follows. F(1)F(0) ATP synthase produces ATP from ADP in the presence of a proton or sodium gradient. F-type ATPases consist of two structural domains, F(1) containing the extramembraneous catalytic core and F(0) containing the membrane proton channel, linked together by a central stalk and a peripheral stalk. During catalysis, ATP synthesis in the catalytic domain of F(1) is coupled via a rotary mechanism of the central stalk subunits to proton translocation. In terms of biological role, this protein is part of the stalk that links CF(0) to CF(1). It either transmits conformational changes from CF(0) to CF(1) or is implicated in proton conduction. This chain is ATP synthase subunit delta, found in Wigglesworthia glossinidia brevipalpis.